Reading from the N-terminus, the 172-residue chain is NADH-quinone oxidoreductase subunit B (172 aa).

[4Fe-4S] cluster-binding residues include C42, C43, C107, and C136.

Belongs to the complex I 20 kDa subunit family. In terms of assembly, NDH-1 is composed of 14 different subunits. Subunits NuoB, C, D, E, F, and G constitute the peripheral sector of the complex. The cofactor is [4Fe-4S] cluster.

The protein localises to the cell inner membrane. It carries out the reaction a quinone + NADH + 5 H(+)(in) = a quinol + NAD(+) + 4 H(+)(out). Functionally, NDH-1 shuttles electrons from NADH, via FMN and iron-sulfur (Fe-S) centers, to quinones in the respiratory chain. The immediate electron acceptor for the enzyme in this species is believed to be ubiquinone. Couples the redox reaction to proton translocation (for every two electrons transferred, four hydrogen ions are translocated across the cytoplasmic membrane), and thus conserves the redox energy in a proton gradient. In Sulfurovum sp. (strain NBC37-1), this protein is NADH-quinone oxidoreductase subunit B.